The chain runs to 398 residues: Phosphoglycerate kinase (398 aa).

Substrate is bound by residues D21–N23, R36, H59–R62, R118, and R151. ATP is bound by residues K201, E323, and G353 to T356.

The protein belongs to the phosphoglycerate kinase family. In terms of assembly, monomer.

The protein localises to the cytoplasm. The enzyme catalyses (2R)-3-phosphoglycerate + ATP = (2R)-3-phospho-glyceroyl phosphate + ADP. It functions in the pathway carbohydrate degradation; glycolysis; pyruvate from D-glyceraldehyde 3-phosphate: step 2/5. In Ruegeria pomeroyi (strain ATCC 700808 / DSM 15171 / DSS-3) (Silicibacter pomeroyi), this protein is Phosphoglycerate kinase.